The following is a 317-amino-acid chain: MTDKLTSLRQYTTVVADTGDIAAMKLYQPQDATTNPSLILNAAQIPEYRKLIDDAVAWAKQQSNDRAQQIVDATDKLAVNIGLEILKLVPGRISTEVDARLSYDTEASIAKAKRLIKLYNDAGISNDRILIKLASTWQGIRAAEQLEKEGINCNLTLLFSFAQARACAEAGVFLISPFVGRILDWYKANTDKKEYAPAEDPGVVSVSEIYQYYKEHGYETVVMGASFRNIGEILELAGCDRLTIAPTLLKELAESEGAIERKLSYTGEVKARPARITESEFLWQHNQDPMAVDKLAEGIRKFAIDQEKLEKMIGDLL.

Lysine 132 functions as the Schiff-base intermediate with substrate in the catalytic mechanism.

Belongs to the transaldolase family. Type 1 subfamily. In terms of assembly, homodimer.

Its subcellular location is the cytoplasm. It catalyses the reaction D-sedoheptulose 7-phosphate + D-glyceraldehyde 3-phosphate = D-erythrose 4-phosphate + beta-D-fructose 6-phosphate. The protein operates within carbohydrate degradation; pentose phosphate pathway; D-glyceraldehyde 3-phosphate and beta-D-fructose 6-phosphate from D-ribose 5-phosphate and D-xylulose 5-phosphate (non-oxidative stage): step 2/3. Functionally, transaldolase is important for the balance of metabolites in the pentose-phosphate pathway. This chain is Transaldolase (talB), found in Escherichia coli O104:H4 (strain 2009EL-2071).